Consider the following 274-residue polypeptide: Protein FRG1 homolog (274 aa).

Positions 20–36 match the Nuclear localization signal motif; sequence KKNLFKVGKEKKKKNKD. Positions 27-46 are disordered; that stretch reads GKEKKKKNKDDKEKIDPDTV. The segment covering 34–43 has biased composition (basic and acidic residues); it reads NKDDKEKIDP. The Bipartite nuclear localization signal signature appears at 252 to 268; it reads QADGSAHELLLDRRMKM.

The protein belongs to the FRG1 family.

It is found in the nucleus. The protein localises to the cajal body. The protein resides in the nucleolus. It localises to the cytoplasm. Binds to mRNA in a sequence-independent manner. May play a role in regulation of pre-mRNA splicing or in the assembly of rRNA into ribosomal subunits. May be involved in mRNA transport. May be involved in epigenetic regulation of muscle differentiation through regulation of activity of the histone-lysine N-methyltransferase KMT5B. This chain is Protein FRG1 homolog (frg-1), found in Caenorhabditis elegans.